A 164-amino-acid polypeptide reads, in one-letter code: Peptidyl-prolyl cis-trans isomerase (164 aa).

Residues 7 to 163 form the PPIase cyclophilin-type domain; sequence FFDLQANGEN…KKITIADCGQ (157 aa).

It belongs to the cyclophilin-type PPIase family. PPIase A subfamily.

It localises to the cytoplasm. It catalyses the reaction [protein]-peptidylproline (omega=180) = [protein]-peptidylproline (omega=0). With respect to regulation, binds cyclosporin A (CsA). CsA mediates some of its effects via an inhibitory action on PPIase. PPIases accelerate the folding of proteins. It catalyzes the cis-trans isomerization of proline imidic peptide bonds in oligopeptides. This is Peptidyl-prolyl cis-trans isomerase from Hemicentrotus pulcherrimus (Sea urchin).